A 109-amino-acid polypeptide reads, in one-letter code: Large ribosomal subunit protein uL22 (109 aa).

It belongs to the universal ribosomal protein uL22 family. In terms of assembly, part of the 50S ribosomal subunit.

In terms of biological role, this protein binds specifically to 23S rRNA; its binding is stimulated by other ribosomal proteins, e.g. L4, L17, and L20. It is important during the early stages of 50S assembly. It makes multiple contacts with different domains of the 23S rRNA in the assembled 50S subunit and ribosome. Functionally, the globular domain of the protein is located near the polypeptide exit tunnel on the outside of the subunit, while an extended beta-hairpin is found that lines the wall of the exit tunnel in the center of the 70S ribosome. This Neisseria gonorrhoeae (strain ATCC 700825 / FA 1090) protein is Large ribosomal subunit protein uL22.